The following is a 290-amino-acid chain: MDGEQRGRSDRPGGSPHLPFLSNPLMGDVVSDWSPLHDAAIHGCLLTLRNLISQGWPVNIITADHVSPLHEACLRGHLSCASVLLSHGAQVNGMTIDWRTPLFNACVSGSQDCVNLLLQHGATPHPETELASPIHEAAKRGYVKCIESLAAHGANIDYNISHLGTPLYVACKNQQVACAKKLLESGVSVNQGKGLDSPLHVVARMSSVELVHLLMDFGANAQAKNADGKRPVDLVPLESPLIQIFLQNEGPQSLRQLCRLRIRKCFGIRQHHKISELLLPEDLKRFLLHL.

An N-acetylmethionine modification is found at M1. Residues M1–R11 show a composition bias toward basic and acidic residues. A disordered region spans residues M1–F20. ANK repeat units follow at residues S31–I60, D64–G93, D97–P126, E129–Y158, H162–Q191, and G194–A223. The SOCS box domain occupies P236–L290.

The protein belongs to the ankyrin SOCS box (ASB) family. Substrate-recognition component of the ECS(ASB9) complex, composed of ASB9, CUL5, ELOB, ELOC and RNF7/RBX2.

It is found in the mitochondrion. It participates in protein modification; protein ubiquitination. Its function is as follows. Substrate-recognition component of a cullin-5-RING E3 ubiquitin-protein ligase complex (ECS complex, also named CRL5 complex), which mediates the ubiquitination and subsequent proteasomal degradation of target proteins. The ECS(ASB9) complex catalyzes ubiquitination of creatine kinases CKB and CKMT1A. This is Ankyrin repeat and SOCS box protein 9 from Mus musculus (Mouse).